Reading from the N-terminus, the 203-residue chain is MIKSVTLRSFHLPIEFNDTKFVSRPCFLARSFPVVRCSSTRDVPKLELFSRGKFDRILQDPPLIEKAESELSDYCSTLEGDDSYSCWRAYFELKDLEREKPKVEVENLILQTGGLKSLIGCLHGVASMEKDNKTKNGLHVGEESDREKGMNLHIHIPDGLPKSEQELEEEEKSKMPDSAFTRLLRSKGTIPAWFSHAPDHETD.

Positions 156–178 (IPDGLPKSEQELEEEEKSKMPDS) are disordered. Residues 161–175 (PKSEQELEEEEKSKM) show a composition bias toward basic and acidic residues.

In terms of assembly, homotetramer. Interacts with MEE12/CCG, MED7A, MED7B, MED9, AGL49, AGL53, AGL75, AGL80, AGL81, AGL82, AGL103 and NRPB1 (via CTD). In terms of tissue distribution, expressed in roots, leaves, stems and flowers. Expressed in the central cell of mature ovules.

The protein resides in the nucleus. It is found in the cytoplasm. Required for the development of the one-cell zygote and endosperm in embryos. Required for micropylar pollen tube guidance, but has no effect on ovule development and gametophytic cell fate specification. May connect transcription factors and the Pol II machinery to regulate pollen tube attraction, via its interactions with AGAMOUS-like (AGL) transcription factors, MEE14/CCG and the Mediator complex. The polypeptide is CCG-binding protein 1 (Arabidopsis thaliana (Mouse-ear cress)).